The chain runs to 551 residues: MFRNALRQSTRAVGAFSATGRVAARNAAPVVSAVQARTYADAKATPTEVSSILEQRIRGVQEESNLAETGRVLSVGDGIARVHGMANVQAEELVEFASGVKGMCMNLEAGQVGVVLFGSDRLVKEGETVKRTGEIVDVPVGPELLGRVIDALGNPIDGKGPINCKEKRRAQLKAPGILPRQSVNQPVQTGLKSVDAMVPIGRGQRELIIGDRQTGKTAVALDAILNQKRWNSGSDEDKKLYCVYVAVGQKRSTVAQLVKTLEENDAMKYSIVVAATASEAAPLQYLAPFTGACVGEYFRDNGKHSLVIFDDLTKQAVAYRQMSLLLRRPPGREAYPGDVFYLHSRLLERAAKMNKTHGGGSMTALPVIETQGGDVSAYIPTNVISITDGQIFLESELFYKGVRPAINVGLSVSRVGSAAQLKAMKQVAGSLKLFLAQYREVAAFAQFGSDLDAATKQTLNRGERLTELLKQKQYSPMAVNEMVPLIFAGVNGFLDSVPVAKILQWEADFLAHLKTNEPEIMATIDKEGAISKDLEAKLRDVIQTFTKSFLG.

210 to 217 contributes to the ATP binding site; the sequence is GDRQTGKT.

This sequence belongs to the ATPase alpha/beta chains family. In terms of assembly, F-type ATPases have 2 components, CF(1) - the catalytic core - and CF(0) - the membrane proton channel. CF(1) has five subunits: alpha(3), beta(3), gamma(1), delta(1), epsilon(1). CF(0) has three main subunits: a, b and c.

The protein resides in the mitochondrion. The protein localises to the mitochondrion inner membrane. Mitochondrial membrane ATP synthase (F(1)F(0) ATP synthase or Complex V) produces ATP from ADP in the presence of a proton gradient across the membrane which is generated by electron transport complexes of the respiratory chain. F-type ATPases consist of two structural domains, F(1) - containing the extramembraneous catalytic core, and F(0) - containing the membrane proton channel, linked together by a central stalk and a peripheral stalk. During catalysis, ATP synthesis in the catalytic domain of F(1) is coupled via a rotary mechanism of the central stalk subunits to proton translocation. Subunits alpha and beta form the catalytic core in F(1). Rotation of the central stalk against the surrounding alpha(3)beta(3) subunits leads to hydrolysis of ATP in three separate catalytic sites on the beta subunits. Subunit alpha does not bear the catalytic high-affinity ATP-binding sites. This Neurospora crassa (strain ATCC 24698 / 74-OR23-1A / CBS 708.71 / DSM 1257 / FGSC 987) protein is ATP synthase subunit alpha, mitochondrial (atp-1).